A 441-amino-acid chain; its full sequence is tRNA-2-methylthio-N(6)-dimethylallyladenosine synthase (441 aa).

The 117-residue stretch at 5-121 (KKLFIKTYGC…LPQMEARLRE (117 aa)) folds into the MTTase N-terminal domain. Residues Cys-14, Cys-50, Cys-84, Cys-159, Cys-163, and Cys-166 each contribute to the [4Fe-4S] cluster site. The 236-residue stretch at 145–380 (ARRAPSAFLT…TRQQQDIQQS (236 aa)) folds into the Radical SAM core domain. The TRAM domain maps to 379–441 (QSMVGRDVSV…RNSLAAVTLA (63 aa)).

This sequence belongs to the methylthiotransferase family. MiaB subfamily. As to quaternary structure, monomer. Requires [4Fe-4S] cluster as cofactor.

The protein resides in the cytoplasm. It carries out the reaction N(6)-dimethylallyladenosine(37) in tRNA + (sulfur carrier)-SH + AH2 + 2 S-adenosyl-L-methionine = 2-methylsulfanyl-N(6)-dimethylallyladenosine(37) in tRNA + (sulfur carrier)-H + 5'-deoxyadenosine + L-methionine + A + S-adenosyl-L-homocysteine + 2 H(+). Catalyzes the methylthiolation of N6-(dimethylallyl)adenosine (i(6)A), leading to the formation of 2-methylthio-N6-(dimethylallyl)adenosine (ms(2)i(6)A) at position 37 in tRNAs that read codons beginning with uridine. This is tRNA-2-methylthio-N(6)-dimethylallyladenosine synthase from Roseobacter denitrificans (strain ATCC 33942 / OCh 114) (Erythrobacter sp. (strain OCh 114)).